Consider the following 255-residue polypeptide: NAD kinase (255 aa).

The Proton acceptor role is filled by Asp-44. Residues 44-45 (DG), 114-115 (NE), Asp-144, Ala-152, and 155-160 (TAYNLS) contribute to the NAD(+) site.

Belongs to the NAD kinase family. It depends on a divalent metal cation as a cofactor.

Its subcellular location is the cytoplasm. The enzyme catalyses NAD(+) + ATP = ADP + NADP(+) + H(+). Its function is as follows. Involved in the regulation of the intracellular balance of NAD and NADP, and is a key enzyme in the biosynthesis of NADP. Catalyzes specifically the phosphorylation on 2'-hydroxyl of the adenosine moiety of NAD to yield NADP. This chain is NAD kinase, found in Hyphomonas neptunium (strain ATCC 15444).